We begin with the raw amino-acid sequence, 63 residues long: Large ribosomal subunit protein bL28 (63 aa).

It belongs to the bacterial ribosomal protein bL28 family.

The sequence is that of Large ribosomal subunit protein bL28 from Hydrogenobaculum sp. (strain Y04AAS1).